A 312-amino-acid polypeptide reads, in one-letter code: Glyoxylate/hydroxypyruvate reductase A (312 aa).

Residue R227 is part of the active site. H275 serves as the catalytic Proton donor.

It belongs to the D-isomer specific 2-hydroxyacid dehydrogenase family. GhrA subfamily.

It localises to the cytoplasm. It carries out the reaction glycolate + NADP(+) = glyoxylate + NADPH + H(+). It catalyses the reaction (R)-glycerate + NAD(+) = 3-hydroxypyruvate + NADH + H(+). The catalysed reaction is (R)-glycerate + NADP(+) = 3-hydroxypyruvate + NADPH + H(+). Its function is as follows. Catalyzes the NADPH-dependent reduction of glyoxylate and hydroxypyruvate into glycolate and glycerate, respectively. This Salmonella paratyphi B (strain ATCC BAA-1250 / SPB7) protein is Glyoxylate/hydroxypyruvate reductase A.